The sequence spans 290 residues: Thioredoxin-like protein 1 (290 aa).

The region spanning 24 to 104 is the Thioredoxin domain; the sequence is VDCYADWCGP…PQALKEKVAL (81 aa). C31 and C34 are disulfide-bonded. One can recognise a PITH domain in the interval 118–290; that stretch reads SSSAPVKGFA…SKGKLQKVEA (173 aa).

It localises to the cytoplasm. The protein resides in the nucleus. In terms of biological role, has a role in cellular detoxification of alkyl hydroperoxide. The sequence is that of Thioredoxin-like protein 1 (txl1) from Schizosaccharomyces pombe (strain 972 / ATCC 24843) (Fission yeast).